Consider the following 248-residue polypeptide: Ribosomal RNA small subunit methyltransferase G (248 aa).

S-adenosyl-L-methionine-binding positions include G85, F90, 137–138 (IE), and R156.

It belongs to the methyltransferase superfamily. RNA methyltransferase RsmG family.

It localises to the cytoplasm. Its function is as follows. Specifically methylates the N7 position of a guanine in 16S rRNA. The polypeptide is Ribosomal RNA small subunit methyltransferase G (Parasynechococcus marenigrum (strain WH8102)).